The following is a 634-amino-acid chain: Probable potassium transport system protein Kup 1 (634 aa).

12 helical membrane-spanning segments follow: residues 20–40 (FLTL…TSPL), 64–84 (VMSL…VLLI), 110–130 (FAAI…DAII), 148–168 (PVFD…LFVV), 176–196 (VAAW…LGGI), 224–244 (AGLL…ALYA), 256–276 (FAWF…QGAM), 290–310 (FLFP…ATII), 348–368 (IYIP…VFAF), 377–397 (AYGI…YFVM), 405–425 (VATS…FLMA), and 430–450 (IFEG…VMIT).

This sequence belongs to the HAK/KUP transporter (TC 2.A.72) family.

The protein localises to the cell inner membrane. The catalysed reaction is K(+)(in) + H(+)(in) = K(+)(out) + H(+)(out). In terms of biological role, transport of potassium into the cell. Likely operates as a K(+):H(+) symporter. In Rhodopseudomonas palustris (strain BisB5), this protein is Probable potassium transport system protein Kup 1.